A 214-amino-acid chain; its full sequence is Large ribosomal subunit protein uL2my, C-terminal part (214 aa).

The N-terminal 30 residues, 1-30 (MSGLVALCRARASASSSLFNSVIRPAFRNF), are a transit peptide targeting the mitochondrion. A disordered region spans residues 157-214 (VAMNPCDHPHGGGEGKSKSSGSRGRTSVSPWGKPCKGGYKSASVKKKKKRLAEAAAKM). Residues 163–173 (DHPHGGGEGKS) are compositionally biased toward basic and acidic residues. Over residues 174 to 185 (KSSGSRGRTSVS) the composition is skewed to low complexity.

Belongs to the universal ribosomal protein uL2 family. Component of the mitochondrial ribosome large subunit.

The protein localises to the mitochondrion. This is Large ribosomal subunit protein uL2my, C-terminal part from Arabidopsis thaliana (Mouse-ear cress).